We begin with the raw amino-acid sequence, 431 residues long: Glucose-1-phosphate adenylyltransferase (431 aa).

Lys39 contacts beta-D-fructose 1,6-bisphosphate. Arg40, His46, and Arg52 together coordinate AMP. Tyr114 provides a ligand contact to alpha-D-glucose 1-phosphate. Arg130 is an AMP binding site. Residues Gly179, 194 to 195, and Ser212 contribute to the alpha-D-glucose 1-phosphate site; that span reads EK. The AMP site is built by Glu370 and Arg386. Residues 419–423 and 429–431 contribute to the beta-D-fructose 1,6-bisphosphate site; these read REMLR and QER.

It belongs to the bacterial/plant glucose-1-phosphate adenylyltransferase family. Homotetramer.

The catalysed reaction is alpha-D-glucose 1-phosphate + ATP + H(+) = ADP-alpha-D-glucose + diphosphate. Its pathway is glycan biosynthesis; glycogen biosynthesis. With respect to regulation, allosterically activated by fructose-1,6-bisphosphate (F16BP) and inhibited by AMP. Its function is as follows. Involved in the biosynthesis of ADP-glucose, a building block required for the elongation reactions to produce glycogen. Catalyzes the reaction between ATP and alpha-D-glucose 1-phosphate (G1P) to produce pyrophosphate and ADP-Glc. This is Glucose-1-phosphate adenylyltransferase from Salmonella paratyphi C (strain RKS4594).